Reading from the N-terminus, the 147-residue chain is Transcriptional repressor NrdR (147 aa).

A zinc finger spans residues cysteine 3 to cysteine 34. The ATP-cone domain occupies leucine 46–aspartate 136.

It belongs to the NrdR family. The cofactor is Zn(2+).

In terms of biological role, negatively regulates transcription of bacterial ribonucleotide reductase nrd genes and operons by binding to NrdR-boxes. The chain is Transcriptional repressor NrdR from Tropheryma whipplei (strain TW08/27) (Whipple's bacillus).